A 1123-amino-acid chain; its full sequence is MADTAAVAKGVENLSVSASKTKELKGTEKRDTLIEIEKRYQQKWEQEGVFEVDAPSTAEFPLDAITPDELRQKHPKFFGTIAYPYMNGRLHAGHAFSFSKIEYHTGFARMQGKRALFPQGYHCTGLPIKASADKLVKEIEMFGQEFERYKEDEVVEGAAPAAAAAPKTKEDLTKFNAKKGKTVAKTGGAKYQFQILKSLGIPVSEIHKFADPQYWLHYFPPECKKDLTNFGARIDWRRQFVTTDANPYYDAFVRWQMNRLLELNKIKFGKRYTIYSIKDGQPCMDHDRSEGEGVLPQEYTALKLKVTEWAPKAAEALKGKLPEGANVYLCPATLRPETMYGQVCCFVGPALKYGVFKAAENEYFVITERAAKNMAYQGIFEKEGVIEKAADIVGSDLIGTLVNAPLSVHKEVYVLPMDTVLATKGTGVVTSVPSDSPDDCAMMTELAKKPEFYGIQKEWAEKEIVSVIKTPTSDLLAPYLVKKLKINSPKDAKQLLEAKELAYKEGFYQGIMNYGDFKGEKVETAKPKVRQQLIDAGDAFAYSEPENKVVSRSGDECSVALMDQWYIDYGEDSWRTVLYDYVENKDGKGINTYYADTQHAFKGVIGWLKQWACARTYGLGSKLPWDPNFLVESLSDSTVYMAYYTVAHWLHRDLFGREKGKGNIGADQMIDEVWDYIFCRTELSDHLVTKSGIPKETLDSMRREFQYFYPLDIRVSGKDLIPNHLTFWLYNHIALFPREYWPKSVRANGHLQLNGEKMSKSTGNFMTLDDVVKKYGADAARVALADAGDGISDSNFVEDVADNTILRFYTNKEWIEETLKDESLRTGELNSFQDALFDNEMNALVNEARKHYEETSYKLALKAAHYDFLNARDMYREACAAAGIPLHKDLVTKYIRLQALVITPIAPHWADYVWQECLGEPKSIQFARWPEVPAANPALTAARDYVRTTSSAINSAEAAQLKKMAKGRQSDFDPKKPKKLTIFATENFPTWQAKYIDLLSEVWDAATGTQKIDDKELNGRIAKMGEMKKAMPFVQALKKRLKDGEPAEQILSRKLSFDEKATLLAMIPGLKRTAGLESVQVVLVEEGSKTGKDLTNGGAEIEVTAPMAEAALPGQPSFFFTNV.

Residues 84-94 (PYMNGRLHAGH) carry the 'HIGH' region motif. The 'KMSKS' region signature appears at 757-761 (KMSKS). Lys760 contributes to the ATP binding site.

Belongs to the class-I aminoacyl-tRNA synthetase family.

It is found in the cytoplasm. It carries out the reaction tRNA(Leu) + L-leucine + ATP = L-leucyl-tRNA(Leu) + AMP + diphosphate. The chain is Leucine--tRNA ligase, cytoplasmic (leu-6) from Neurospora crassa (strain ATCC 24698 / 74-OR23-1A / CBS 708.71 / DSM 1257 / FGSC 987).